Here is a 335-residue protein sequence, read N- to C-terminus: MVMIHIFLTVMVVGGVSLFPETAEAIVMGPSMQKLTWHYYKVYNTCENAENFVRHQVEIFYKNDKSIAPKLLRLLYSDCFVSGCDASVLLEGPNSEKMAPQNRGLGGFVLIDKIKIVLEQRCPGVVSCADILNLATRDAVHLAGAPSYPVFTGRRDGLTSDKQTVDLPSPSISWDQAMSYFKSRGLNVLDMATLLGSHSMGRTHCSYVVDRLYNYNKTGKPSPTMNKYFLSEMAKQCPPRTRKGQTDPLVYLNPDSGSNHSFTSSFYSRILSNKSVLEVDQQLLYNDDTKQISKEFSEGFEDFRKSFALSMSKMGAINVLTKTEGEIRKDCRHIN.

Residues 1–18 (MVMIHIFLTVMVVGGVSL) form the signal peptide. 4 disulfides stabilise this stretch: Cys-46/Cys-122, Cys-79/Cys-84, Cys-128/Cys-331, and Cys-205/Cys-237. The active site involves Arg-73. Residues Asp-78, Val-81, Gly-83, Asp-85, and Ser-87 each contribute to the Ca(2+) site. Residue Pro-168 participates in substrate binding. His-198 provides a ligand contact to heme b. Ser-199 is a binding site for Ca(2+). Asn-216 carries N-linked (GlcNAc...) asparagine glycosylation. Asp-255 and Ser-258 together coordinate Ca(2+). Residues Asn-259 and Asn-273 are each glycosylated (N-linked (GlcNAc...) asparagine).

Belongs to the peroxidase family. Classical plant (class III) peroxidase subfamily. The cofactor is heme b. Ca(2+) is required as a cofactor.

It localises to the secreted. The enzyme catalyses 2 a phenolic donor + H2O2 = 2 a phenolic radical donor + 2 H2O. Removal of H(2)O(2), oxidation of toxic reductants, biosynthesis and degradation of lignin, suberization, auxin catabolism, response to environmental stresses such as wounding, pathogen attack and oxidative stress. The enzyme activity has to be proved. The polypeptide is Probable peroxidase 26 (PER26) (Arabidopsis thaliana (Mouse-ear cress)).